The following is a 418-amino-acid chain: Serine hydroxymethyltransferase 2 (418 aa).

Residues Leu121 and Gly125–Leu127 each bind (6S)-5,6,7,8-tetrahydrofolate. Lys230 is subject to N6-(pyridoxal phosphate)lysine. Residue Ser355–Phe357 participates in (6S)-5,6,7,8-tetrahydrofolate binding.

The protein belongs to the SHMT family. As to quaternary structure, homodimer. Pyridoxal 5'-phosphate serves as cofactor.

Its subcellular location is the cytoplasm. It catalyses the reaction (6R)-5,10-methylene-5,6,7,8-tetrahydrofolate + glycine + H2O = (6S)-5,6,7,8-tetrahydrofolate + L-serine. The protein operates within one-carbon metabolism; tetrahydrofolate interconversion. It participates in amino-acid biosynthesis; glycine biosynthesis; glycine from L-serine: step 1/1. Catalyzes the reversible interconversion of serine and glycine with tetrahydrofolate (THF) serving as the one-carbon carrier. This reaction serves as the major source of one-carbon groups required for the biosynthesis of purines, thymidylate, methionine, and other important biomolecules. Also exhibits THF-independent aldolase activity toward beta-hydroxyamino acids, producing glycine and aldehydes, via a retro-aldol mechanism. In Pseudomonas aeruginosa (strain ATCC 15692 / DSM 22644 / CIP 104116 / JCM 14847 / LMG 12228 / 1C / PRS 101 / PAO1), this protein is Serine hydroxymethyltransferase 2.